Consider the following 355-residue polypeptide: RNA binding protein fox-1 homolog 1 (355 aa).

A disordered region spans residues 1-123 (MNCEREQLRG…QPKRLHVSNI (123 aa)). The segment covering 70–112 (QSHSEQSAADTSAHTVSGTATTDDSAPTDGQPQTQPSENTENK) has biased composition (polar residues). In terms of domain architecture, RRM spans 116–174 (KRLHVSNIPFRFRDPDLRQMFGGFGFVTFENSADADRAREKLHGTVVEGRKIEVNNATA). Asymmetric dimethylarginine is present on Arg298.

As to quaternary structure, binds to the C-terminus of ATXN2.

The protein resides in the nucleus. It localises to the cytoplasm. Its function is as follows. RNA-binding protein that regulates alternative splicing events by binding to 5'-UGCAUGU-3' elements. Prevents binding of U2AF2 to the 3'-splice site. Regulates alternative splicing of tissue-specific exons and of differentially spliced exons during erythropoiesis. This is RNA binding protein fox-1 homolog 1 (RBFOX1) from Bos taurus (Bovine).